Here is a 188-residue protein sequence, read N- to C-terminus: UPF0340 protein GK3370 (188 aa).

Belongs to the UPF0340 family.

This is UPF0340 protein GK3370 from Geobacillus kaustophilus (strain HTA426).